The following is a 228-amino-acid chain: Histone H1-III (228 aa).

Positions 1 to 18 are enriched in low complexity; that stretch reads MSDPAPEVASAVPVASPA. Disordered stretches follow at residues 1–44 and 98–228; these read MSDP…PPVS and LQTK…AKKA. The 75-residue stretch at 39 to 113 folds into the H15 domain; sequence THPPVSEMVV…GASGSFKLPA (75 aa). Positions 115 to 133 are enriched in basic and acidic residues; that stretch reads AKKEKVAKTPKKAAGEKKP. Basic residues-rich tracts occupy residues 148–170 and 178–209; these read SIAKKPKAATATKVKKPVAKSTK and AAKKAAPKPKAAPKPKAATKPKKEVKPKKVAA. Residues 211–221 show a composition bias toward basic and acidic residues; sequence KPAEKKPEAAK.

The protein belongs to the histone H1/H5 family.

Its subcellular location is the nucleus. It localises to the chromosome. Histones H1 are necessary for the condensation of nucleosome chains into higher-order structures. The protein is Histone H1-III of Glyptotendipes barbipes (Midge).